The chain runs to 95 residues: Cell division topological specificity factor (95 aa).

It belongs to the MinE family.

Prevents the cell division inhibition by proteins MinC and MinD at internal division sites while permitting inhibition at polar sites. This ensures cell division at the proper site by restricting the formation of a division septum at the midpoint of the long axis of the cell. The protein is Cell division topological specificity factor of Microcystis aeruginosa (strain NIES-843 / IAM M-2473).